Reading from the N-terminus, the 300-residue chain is Porphobilinogen deaminase (300 aa).

C239 is subject to S-(dipyrrolylmethanemethyl)cysteine.

This sequence belongs to the HMBS family. As to quaternary structure, monomer. Requires dipyrromethane as cofactor.

It carries out the reaction 4 porphobilinogen + H2O = hydroxymethylbilane + 4 NH4(+). The protein operates within porphyrin-containing compound metabolism; protoporphyrin-IX biosynthesis; coproporphyrinogen-III from 5-aminolevulinate: step 2/4. Functionally, tetrapolymerization of the monopyrrole PBG into the hydroxymethylbilane pre-uroporphyrinogen in several discrete steps. The sequence is that of Porphobilinogen deaminase from Francisella philomiragia subsp. philomiragia (strain ATCC 25017 / CCUG 19701 / FSC 153 / O#319-036).